A 233-amino-acid polypeptide reads, in one-letter code: Purine nucleoside phosphorylase DeoD-type (233 aa).

His-4 contacts a purine D-ribonucleoside. Phosphate is bound by residues Gly-20, Arg-24, Arg-43, and 87 to 90 (RIGT). A purine D-ribonucleoside is bound by residues 179-181 (EME) and 203-204 (SD). Catalysis depends on Asp-204, which acts as the Proton donor.

The protein belongs to the PNP/UDP phosphorylase family. As to quaternary structure, homohexamer; trimer of homodimers.

The catalysed reaction is a purine D-ribonucleoside + phosphate = a purine nucleobase + alpha-D-ribose 1-phosphate. It carries out the reaction a purine 2'-deoxy-D-ribonucleoside + phosphate = a purine nucleobase + 2-deoxy-alpha-D-ribose 1-phosphate. Catalyzes the reversible phosphorolytic breakdown of the N-glycosidic bond in the beta-(deoxy)ribonucleoside molecules, with the formation of the corresponding free purine bases and pentose-1-phosphate. The sequence is that of Purine nucleoside phosphorylase DeoD-type from Helicobacter acinonychis (strain Sheeba).